A 1043-amino-acid polypeptide reads, in one-letter code: Probable inorganic carbon transporter subunit DabA (1043 aa).

Positions 460, 462, 719, and 734 each coordinate Zn(2+).

This sequence belongs to the inorganic carbon transporter (TC 9.A.2) DabA family. As to quaternary structure, forms a complex with DabB. Requires Zn(2+) as cofactor.

The protein resides in the cell inner membrane. Part of an energy-coupled inorganic carbon pump. The polypeptide is Probable inorganic carbon transporter subunit DabA (Thiobacillus denitrificans (strain ATCC 25259 / T1)).